Consider the following 117-residue polypeptide: Immunoglobulin heavy variable 3-48 (117 aa).

An N-terminal signal peptide occupies residues 1–19; sequence MELGLCWVFLVAILEGVQC. A framework-1 region spans residues 20-44; that stretch reads EVQLVESGGGLVQPGGSLRLSCAAS. One can recognise an Ig-like domain in the interval 20-117; sequence EVQLVESGGG…EDTAVYYCAR (98 aa). A disulfide bridge connects residues C41 and C115. Residues 45-52 are complementarity-determining-1; it reads GFTFSSYE. The segment at 53 to 69 is framework-2; it reads MNWVRQAPGKGLEWVSY. The segment at 70 to 77 is complementarity-determining-2; that stretch reads ISSSGSTI. The segment at 78 to 115 is framework-3; it reads YYADSVKGRFTISRDNAKNSLYLQMNSLRAEDTAVYYC. The complementarity-determining-3 stretch occupies residues 116–117; the sequence is AR.

Immunoglobulins are composed of two identical heavy chains and two identical light chains; disulfide-linked. Post-translationally, the N-terminus is blocked.

It localises to the secreted. Its subcellular location is the cell membrane. In terms of biological role, v region of the variable domain of immunoglobulin heavy chains that participates in the antigen recognition. Immunoglobulins, also known as antibodies, are membrane-bound or secreted glycoproteins produced by B lymphocytes. In the recognition phase of humoral immunity, the membrane-bound immunoglobulins serve as receptors which, upon binding of a specific antigen, trigger the clonal expansion and differentiation of B lymphocytes into immunoglobulins-secreting plasma cells. Secreted immunoglobulins mediate the effector phase of humoral immunity, which results in the elimination of bound antigens. The antigen binding site is formed by the variable domain of one heavy chain, together with that of its associated light chain. Thus, each immunoglobulin has two antigen binding sites with remarkable affinity for a particular antigen. The variable domains are assembled by a process called V-(D)-J rearrangement and can then be subjected to somatic hypermutations which, after exposure to antigen and selection, allow affinity maturation for a particular antigen. This is Immunoglobulin heavy variable 3-48 from Homo sapiens (Human).